The primary structure comprises 159 residues: Transmembrane protein 42 (159 aa).

Transmembrane regions (helical) follow at residues 37–57 (FWGV…AASA), 68–88 (GFCV…WTFF), 100–120 (IASV…GFVL), and 124–144 (CQEV…TLIH).

It localises to the membrane. This Bos taurus (Bovine) protein is Transmembrane protein 42 (TMEM42).